A 148-amino-acid polypeptide reads, in one-letter code: MSIDPKLWGNAFWSTLHHVAAGYNDHPSLGARQVMTNFIQSIPVLLPCAECQDHAFDYIGRADLDRVVSSRRQLFLFFFNFHNHVNARLNKPQLAAKTVFQRYRVPFDGEAAAATTEPPFHWSPWLTTALAVILVVVVAGIGHRSRFK.

The ERV/ALR sulfhydryl oxidase domain maps to 1–103 (MSIDPKLWGN…LAAKTVFQRY (103 aa)). Cys48 and Cys51 are oxidised to a cystine. The helical transmembrane segment at 122 to 142 (WSPWLTTALAVILVVVVAGIG) threads the bilayer.

The protein belongs to the IIV-6 347L family. FAD is required as a cofactor.

It localises to the membrane. The enzyme catalyses 2 R'C(R)SH + O2 = R'C(R)S-S(R)CR' + H2O2. In terms of biological role, FAD-dependent sulfhydryl oxidase that catalyzes disulfide bond formation. This is Putative FAD-linked sulfhydryl oxidase 096R from Aedes vexans (Inland floodwater mosquito).